We begin with the raw amino-acid sequence, 302 residues long: Cyclin-dependent kinase 1-B (302 aa).

A Protein kinase domain is found at 4–287; sequence YTKIEKIGEG…ARKAMLHPYF (284 aa). ATP is bound by residues 10–18 and Lys33; that span reads IGEGTYGVV. A Phosphothreonine modification is found at Thr14. Phosphotyrosine; by wee1 and wee2 is present on Tyr15. Catalysis depends on Asp128, which acts as the Proton acceptor. The residue at position 161 (Thr161) is a Phosphothreonine; by cak. Ser277 carries the phosphoserine modification.

Belongs to the protein kinase superfamily. CMGC Ser/Thr protein kinase family. CDC2/CDKX subfamily. As to quaternary structure, forms a stable but non-covalent complex with a regulatory subunit and with a cyclin. Interacts with spdya. In terms of processing, phosphorylation at Tyr-15 by wee1 and wee2 inhibits the protein kinase activity and acts negative regulator of entry into mitosis (G2 to M transition).

It is found in the nucleus. The catalysed reaction is L-seryl-[protein] + ATP = O-phospho-L-seryl-[protein] + ADP + H(+). It catalyses the reaction L-threonyl-[protein] + ATP = O-phospho-L-threonyl-[protein] + ADP + H(+). It carries out the reaction [DNA-directed RNA polymerase] + ATP = phospho-[DNA-directed RNA polymerase] + ADP + H(+). Phosphorylation at Thr-14 or Tyr-15 inactivates the enzyme, while phosphorylation at Thr-161 activates it. Plays a key role in the control of the eukaryotic cell cycle by modulating the centrosome cycle as well as mitotic onset; promotes G2-M transition via association with multiple interphase cyclins. During G2 and early mitosis, CDC25A/B/C-mediated dephosphorylation activates CDK1/cyclin complexes which phosphorylate several substrates that trigger at least centrosome separation, Golgi dynamics, nuclear envelope breakdown and chromosome condensation. Once chromosomes are condensed and aligned at the metaphase plate, CDK1 activity is switched off by WEE1- and PKMYT1-mediated phosphorylation to allow sister chromatid separation, chromosome decondensation, reformation of the nuclear envelope and cytokinesis. Catalyzes lamin (LMNA, LMNB1 and LMNB2) phosphorylation at the onset of mitosis, promoting nuclear envelope breakdown. The polypeptide is Cyclin-dependent kinase 1-B (cdk1-b) (Xenopus laevis (African clawed frog)).